Here is a 435-residue protein sequence, read N- to C-terminus: Apparent malate synthase (435 aa).

Mg(2+)-binding residues include Glu159 and Asn180. Residue Glu159 participates in substrate binding.

The protein belongs to the HpcH/HpaI aldolase family. It depends on Mg(2+) as a cofactor. The cofactor is Mn(2+). Requires Co(2+) as cofactor. Ca(2+) serves as cofactor.

It catalyses the reaction (S)-malyl-CoA = glyoxylate + acetyl-CoA. The enzyme catalyses (S)-malyl-CoA + H2O = (S)-malate + CoA + H(+). Its function is as follows. Involved in the methylaspartate cycle. Catalyzes the biosynthesis of malate in two steps. In the first reaction acetyl-CoA is condensed reversibly with glyoxylate to form (S)-malyl-CoA. In the second reaction (S)-malyl-CoA is hydrolyzed to malate and CoA. It can also catalyze the condensation of propionyl-CoA with glyoxylate and of acetyl-CoA with pyruvate, however the CoA-ester hydrolysis reaction is highly specific for (S)-malyl-CoA. This chain is Apparent malate synthase (aceB), found in Haloarcula marismortui (strain ATCC 43049 / DSM 3752 / JCM 8966 / VKM B-1809) (Halobacterium marismortui).